We begin with the raw amino-acid sequence, 264 residues long: AA9 family lytic polysaccharide monooxygenase A (264 aa).

An N-terminal signal peptide occupies residues 1 to 18; the sequence is MHFAALAILSSLVASAAA. Residue histidine 19 participates in Cu(2+) binding. N-linked (GlcNAc...) asparagine glycosylation is found at asparagine 51 and asparagine 75. Cysteine 59 and cysteine 182 are joined by a disulfide. Position 96 (histidine 96) interacts with Cu(2+). N-linked (GlcNAc...) asparagine glycosylation is present at asparagine 110. O2 is bound at residue histidine 162. Tyrosine 179 serves as a coordination point for Cu(2+). Asparagine 218 and asparagine 251 each carry an N-linked (GlcNAc...) asparagine glycan.

Belongs to the polysaccharide monooxygenase AA9 family. Cu(2+) serves as cofactor.

The protein resides in the secreted. It carries out the reaction [(1-&gt;4)-beta-D-glucosyl]n+m + reduced acceptor + O2 = 4-dehydro-beta-D-glucosyl-[(1-&gt;4)-beta-D-glucosyl]n-1 + [(1-&gt;4)-beta-D-glucosyl]m + acceptor + H2O.. Its function is as follows. Lytic polysaccharide monooxygenase (LPMO) that depolymerizes crystalline and amorphous polysaccharides via the oxidation of scissile alpha- or beta-(1-4)-glycosidic bonds, yielding C4 oxidation products. Catalysis by LPMOs requires the reduction of the active-site copper from Cu(II) to Cu(I) by a reducing agent and H(2)O(2) or O(2) as a cosubstrate. Active on cellulose and cello-oligosaccharides, as well as plant cell wall-derived hemicellulosic polysaccharides. Also active on cello-oligosaccharides such as cellohexaose, cellopentaose or cellotetraose. The polypeptide is AA9 family lytic polysaccharide monooxygenase A (Phanerochaete carnosa (strain HHB-10118-sp) (White-rot fungus)).